The sequence spans 95 residues: Aspartyl/glutamyl-tRNA(Asn/Gln) amidotransferase subunit C (95 aa).

It belongs to the GatC family. As to quaternary structure, heterotrimer of A, B and C subunits.

It catalyses the reaction L-glutamyl-tRNA(Gln) + L-glutamine + ATP + H2O = L-glutaminyl-tRNA(Gln) + L-glutamate + ADP + phosphate + H(+). The catalysed reaction is L-aspartyl-tRNA(Asn) + L-glutamine + ATP + H2O = L-asparaginyl-tRNA(Asn) + L-glutamate + ADP + phosphate + 2 H(+). Functionally, allows the formation of correctly charged Asn-tRNA(Asn) or Gln-tRNA(Gln) through the transamidation of misacylated Asp-tRNA(Asn) or Glu-tRNA(Gln) in organisms which lack either or both of asparaginyl-tRNA or glutaminyl-tRNA synthetases. The reaction takes place in the presence of glutamine and ATP through an activated phospho-Asp-tRNA(Asn) or phospho-Glu-tRNA(Gln). This is Aspartyl/glutamyl-tRNA(Asn/Gln) amidotransferase subunit C from Clostridium botulinum (strain ATCC 19397 / Type A).